The sequence spans 376 residues: General transcription factor IIH subunit 2 (376 aa).

A VWFA domain is found at 64 to 206; sequence HVMIVIDCSR…NIRCSAIGLS (143 aa). A C4-type zinc finger spans residues 286–303; the sequence is CTQCGARHCSIPAECPVC.

The protein belongs to the GTF2H2 family. Component of the 7-subunit TFIIH core complex composed of xpb-1, xpd-1, gtf-2H1, gtf-2H2C, gtf-2H3, Y73F8A.24 and gtf-2H5, which is active in NER. The core complex associates with the 3-subunit CDK-activating kinase (CAK) module composed of cyh-1, cdk-7 and mnat-1 to form the 10-subunit holoenzyme (holo-TFIIH) active in transcription.

The protein localises to the nucleus. Component of the general transcription and DNA repair factor IIH (TFIIH) core complex, which is involved in general and transcription-coupled nucleotide excision repair (NER) of damaged DNA and, when complexed to CAK, in RNA transcription by RNA polymerase II. In NER, TFIIH acts by opening DNA around the lesion to allow the excision of the damaged oligonucleotide and its replacement by a new DNA fragment. In transcription, TFIIH has an essential role in transcription initiation. When the pre-initiation complex (PIC) has been established, TFIIH is required for promoter opening and promoter escape. Phosphorylation of the C-terminal tail (CTD) of the largest subunit of RNA polymerase II by the kinase module CAK controls the initiation of transcription. This is General transcription factor IIH subunit 2 from Caenorhabditis elegans.